A 500-amino-acid chain; its full sequence is UPF0371 protein SZO_06760 (500 aa).

It belongs to the UPF0371 family.

The protein is UPF0371 protein SZO_06760 of Streptococcus equi subsp. zooepidemicus (strain H70).